The chain runs to 1052 residues: Membrane-bound transcription factor site-1 protease (1052 aa).

The N-terminal stretch at 1–17 (MKLVNIWLLLLVVLLCG) is a signal peptide. Positions 18–186 (KKHLGDRLGK…TGRHSSRRLL (169 aa)) are excised as a propeptide. Residue Asn148 is glycosylated (N-linked (GlcNAc...) asparagine). Ser168 is subject to Phosphoserine. Residues 187-999 (RAIPRQVAQT…MPGRYNQEVG (813 aa)) lie on the Lumenal side of the membrane. The 283-residue stretch at 190 to 472 (PRQVAQTLQA…HGKLDLLRAY (283 aa)) folds into the Peptidase S8 domain. Asp218 (charge relay system) is an active-site residue. A glycan (N-linked (GlcNAc...) asparagine) is linked at Asn236. The active-site Charge relay system is His249. N-linked (GlcNAc...) asparagine glycosylation occurs at Asn305. The Charge relay system role is filled by Ser414. N-linked (GlcNAc...) asparagine glycosylation is found at Asn515 and Asn728. The segment covering 877-887 (PSLSHSGNRQR) has biased composition (polar residues). The interval 877–900 (PSLSHSGNRQRPPSGAGLAPPERM) is disordered. N-linked (GlcNAc...) asparagine glycosylation is present at Asn939. A helical membrane pass occupies residues 1000 to 1022 (QTIPVFAFLGAMVALAFFVVQIS). Topologically, residues 1023-1052 (KAKSRPKRRRPRAKRPQLAQQAHPARTPSV) are cytoplasmic. The span at 1026-1037 (SRPKRRRPRAKR) shows a compositional bias: basic residues. Residues 1026 to 1052 (SRPKRRRPRAKRPQLAQQAHPARTPSV) are disordered.

It belongs to the peptidase S8 family. Interacts with LYSET; this interaction bridges GNPTAB to MBTPS1. It depends on Ca(2+) as a cofactor. The 148 kDa zymogen is processed progressively into two membrane-bound 120 and 106 kDa forms in the endoplasmic reticulum, and late into a secreted 98 kDa form. The propeptide is autocatalytically removed through an intramolecular cleavage after Leu-186. Further cleavage generates 14, 10, and 8 kDa intermediates. As to expression, widely expressed. In adult rat, highly expressed in anterior pituitary, thyroid and adrenal glands and in liver. In 2-day old rat, detected in developing skin, striated muscles, cardiac muscles, bones, teeth and internal organs. Highly expressed in retina, cerebellum, pituitary, submaxillary, thyroid and adrenal glands, molars, thymus, kidney and intestine.

Its subcellular location is the endoplasmic reticulum membrane. It localises to the golgi apparatus membrane. It catalyses the reaction Processes precursors containing basic and hydrophobic/aliphatic residues at P4 and P2, respectively, with a relatively relaxed acceptance of amino acids at P1 and P3.. With respect to regulation, inhibited by divalent copper and zinc ions, but not by nickel or cobalt. Inhibited by its prosegment, but not smaller fragments. Inhibited by 4-(2-aminoethyl)benzenesulfonyl fluoride (AEBSF), a serine protease inhibitor. Functionally, serine protease that cleaves after hydrophobic or small residues, provided that Arg or Lys is in position P4: known substrates include SREBF1/SREBP1, SREBF2/SREBP2, BDNF, GNPTAB, ATF6, ATF6B and FAM20C. Cleaves substrates after Arg-Ser-Val-Leu (SREBP2), Arg-His-Leu-Leu (ATF6), Arg-Gly-Leu-Thr (BDNF) and its own propeptide after Arg-Arg-Leu-Leu. Catalyzes the first step in the proteolytic activation of the sterol regulatory element-binding proteins (SREBPs) SREBF1/SREBP1 and SREBF2/SREBP2. Also mediates the first step in the proteolytic activation of the cyclic AMP-dependent transcription factor ATF-6 (ATF6 and ATF6B). Mediates the protein cleavage of GNPTAB into subunit alpha and beta, thereby participating in biogenesis of lysosomes. Cleaves the propeptide from FAM20C which is required for FAM20C secretion from the Golgi apparatus membrane and for enhancement of FAM20C kinase activity, promoting osteoblast differentiation and biomineralization. Involved in the regulation of M6P-dependent Golgi-to-lysosome trafficking of lysosomal enzymes. It is required for the activation of CREB3L2/BBF2H7, a transcriptional activator of MIA3/TANGO and other genes controlling mega vesicle formation. Therefore, it plays a key role in the regulation of mega vesicle-mediated collagen trafficking. In astrocytes and osteoblasts, upon DNA damage and ER stress, mediates the first step of the regulated intramembrane proteolytic activation of the transcription factor CREB3L1, leading to the inhibition of cell-cycle progression. The chain is Membrane-bound transcription factor site-1 protease (Mbtps1) from Rattus norvegicus (Rat).